The chain runs to 36 residues: Photosystem I reaction center subunit VIII (36 aa).

The chain crosses the membrane as a helical span at residues 6–26 (LPSIFVPLVGLVFPAIAMASL).

The protein belongs to the PsaI family.

The protein localises to the plastid. It is found in the chloroplast thylakoid membrane. Functionally, may help in the organization of the PsaL subunit. The sequence is that of Photosystem I reaction center subunit VIII from Drimys granadensis.